The chain runs to 601 residues: MSESIQDQDHEKTTIIEKTRRFVLSIFTKDFWIGDYDYSFLLPAIPFTKQKPKSPPFFSLNAKVPVLLALLLGFQHALAMVGGVTSPPRIIAASANLTTEQTNYLVSAGLISSGIMTLIQIARVHIPKTKYYIGTGMLSVLGISFTSVSVAPKVLSQMYENGYCPKDENGTKLPCPDGYGAFLATACVCSLLEIFMSFIPPRILKRLFPPIVTGPVVLLIGTSLISSGLNDWAGGEGSCTGRPTEAEAPGYSLCPSDTSPHALGWGSAQFIGLGFSVFATIIIIERFGPPLMKTTSVVLGLVVGMIISAATGYWDHSIIDAAPVVTFNWVHTFRLRIYGPAVLPMLALYIVNMMEAIGDIGATSDVSMLEVDGPAFDARVQGGILGDGLASLIASLMTTTPLTTFAQNNGVISLTKCANRRAGFFCAVILFFMGLFAKFAAVFVAIPSPVLGGMTTFLFSSVAVSGIAIISQIPFNRRNRFILTASMTLGMGAILVPDWFTYFFEYSGPNKALVGFLDAITLVMENGFAIGAFISIFLNLILPYEFDPDLTNDSPGLSTTNGVNNGIVEVRGIDPNDSLSNTDTEYANENKKDEVDVDKVV.

The next 12 helical transmembrane spans lie at Val-64–Val-84, Thr-102–Ala-122, Tyr-131–Ala-151, Tyr-179–Ile-199, Leu-207–Ser-227, Gly-264–Ile-284, Thr-294–Trp-314, Ile-337–Ile-357, Phe-424–Val-444, Val-450–Ile-470, Phe-481–Thr-501, and Leu-522–Leu-542.

It belongs to the nucleobase:cation symporter-2 (NCS2) (TC 2.A.40) family.

Its subcellular location is the vacuole membrane. In Schizosaccharomyces pombe (strain 972 / ATCC 24843) (Fission yeast), this protein is Putative purine permease C1399.01c.